The sequence spans 211 residues: Protein-methionine-sulfoxide reductase heme-binding subunit MsrQ (211 aa).

The next 5 membrane-spanning stretches (helical) occupy residues 8–28 (VIWL…WLVW), 54–74 (FLLA…PLLI), 82–102 (LWCF…ELGV), 116–136 (PYLT…FTST), and 153–173 (FVYL…KIIS).

Belongs to the MsrQ family. In terms of assembly, heterodimer of a catalytic subunit (MsrP) and a heme-binding subunit (MsrQ). Requires FMN as cofactor. The cofactor is heme b.

The protein localises to the cell inner membrane. Part of the MsrPQ system that repairs oxidized periplasmic proteins containing methionine sulfoxide residues (Met-O), using respiratory chain electrons. Thus protects these proteins from oxidative-stress damage caused by reactive species of oxygen and chlorine generated by the host defense mechanisms. MsrPQ is essential for the maintenance of envelope integrity under bleach stress, rescuing a wide series of structurally unrelated periplasmic proteins from methionine oxidation, including the primary periplasmic chaperone SurA and the lipoprotein Pal. MsrQ provides electrons for reduction to the reductase catalytic subunit MsrP, using the quinone pool of the respiratory chain. This Escherichia coli O6:K15:H31 (strain 536 / UPEC) protein is Protein-methionine-sulfoxide reductase heme-binding subunit MsrQ.